The following is a 331-amino-acid chain: Lipoyl synthase (331 aa).

Positions 1-20 (MTTETNPAVTPAYNPSEKQK) are disordered. Positions 71, 76, 82, 97, 101, 104, and 311 each coordinate [4Fe-4S] cluster. In terms of domain architecture, Radical SAM core spans 82–300 (CFGKGTATFM…EEEAYKMGFA (219 aa)).

It belongs to the radical SAM superfamily. Lipoyl synthase family. It depends on [4Fe-4S] cluster as a cofactor.

It localises to the cytoplasm. It catalyses the reaction [[Fe-S] cluster scaffold protein carrying a second [4Fe-4S](2+) cluster] + N(6)-octanoyl-L-lysyl-[protein] + 2 oxidized [2Fe-2S]-[ferredoxin] + 2 S-adenosyl-L-methionine + 4 H(+) = [[Fe-S] cluster scaffold protein] + N(6)-[(R)-dihydrolipoyl]-L-lysyl-[protein] + 4 Fe(3+) + 2 hydrogen sulfide + 2 5'-deoxyadenosine + 2 L-methionine + 2 reduced [2Fe-2S]-[ferredoxin]. It functions in the pathway protein modification; protein lipoylation via endogenous pathway; protein N(6)-(lipoyl)lysine from octanoyl-[acyl-carrier-protein]: step 2/2. Its function is as follows. Catalyzes the radical-mediated insertion of two sulfur atoms into the C-6 and C-8 positions of the octanoyl moiety bound to the lipoyl domains of lipoate-dependent enzymes, thereby converting the octanoylated domains into lipoylated derivatives. The polypeptide is Lipoyl synthase (Janthinobacterium sp. (strain Marseille) (Minibacterium massiliensis)).